The sequence spans 157 residues: Urease accessory protein UreE (157 aa).

This sequence belongs to the UreE family.

The protein localises to the cytoplasm. Its function is as follows. Involved in urease metallocenter assembly. Binds nickel. Probably functions as a nickel donor during metallocenter assembly. The protein is Urease accessory protein UreE of Corynebacterium glutamicum (strain R).